The primary structure comprises 1499 residues: Ubiquitinating/deubiquitinating enzyme SdeA (1499 aa).

The deubiquitinase stretch occupies residues 1 to 193; that stretch reads MPKYVEGVEL…GKALRENTEK (193 aa). Catalysis depends on for deubiquitinase activity residues H64 and D80. C118 functions as the Nucleophile; for deubiquitinase activity in the catalytic mechanism. The mono-ADP-ribosyltransferase stretch occupies residues 760-1000; that stretch reads PPTRLFRGLN…KALAAFPSDT (241 aa). 766–772 provides a ligand contact to NAD(+); the sequence is RGLNLSE. 5-glutamyl glutamate is present on E860. Position 862 (E862) interacts with NAD(+). The stretch at 1059-1181 forms a coiled coil; sequence KEMGTIRREL…IDTKLADAYL (123 aa).

This sequence belongs to the SidE family. As to quaternary structure, interacts with IcmS. Post-translationally, is able to ubiquitinate itself, but this modification is not required to ubiquitinate Rab33b. Glutamylated at Glu-860 by SidJ; glutamylation inhibits SdeA activity to catalyze the production of ADP-ribosylated ubiquitin.

It localises to the secreted. It is found in the host cell. The enzyme catalyses L-arginyl-[protein] + NAD(+) = N(omega)-(ADP-D-ribosyl)-L-arginyl-[protein] + nicotinamide + H(+). Ubiquitination catalyzed by SdeA is insensitive to the cysteine alkylation agent maleimide, suggesting that a cysteine conjugation of ubiquitin does not form during the reaction. Secreted effector that interferes with the host cell ubiquitin pathway and is required for intracellular bacterial replication. Catalyzes the ubiquitination of several mammalian Rab proteins (Rab33b, Rab1, Rab6a and Rab30) during L.pneumophila infection, without engaging the standard cellular enzyme cascade (E1 and E2). Transfers an ADP-ribose moiety from NAD to the 'Arg-42' residue of ubiquitin in a reaction that releases nicotinamide. The modified ubiquitin is subsequently transferred to serine residues of the substrate protein via a phosphoribose linker that results in the release of AMP. Cannot ubiquitinate the endosomal Rab5 or the cytoskeletal small GTPase Rac1. Also acts as a deubiquitinase (DUB), catalyzing the cleavage of three of the most abundant polyubiquitin chains ('Lys-11', 'Lys-48' and 'Lys-63') with a distinct preference for 'Lys-63' linkages; is thus able to efficiently remove 'Lys-63'-linked polyubiquitin chains from the phagosomal surface. Is also able to remove NEDD8 from neddylated proteins, but is unable to recognize SUMO. The DUB activity of SdeA is important for regulating the dynamics of ubiquitin association with the bacterial phagosome, but is dispensable for its role in intracellular bacterial replication. This Legionella pneumophila subsp. pneumophila (strain Philadelphia 1 / ATCC 33152 / DSM 7513) protein is Ubiquitinating/deubiquitinating enzyme SdeA.